The following is a 172-amino-acid chain: Cold-inducible RNA-binding protein (172 aa).

The 79-residue stretch at 6–84 (GKLFVGGLSF…RQIRVDQAGK (79 aa)) folds into the RRM domain. The segment at 69–172 (GKSVDGRQIR…SYDSYATHNE (104 aa)) is disordered. Gly residues-rich tracts occupy residues 93 to 106 (YRGGSAGGRGFFRG) and 114 to 125 (FSRGGGDRGYGG). Phosphoserine occurs at positions 130, 138, 146, 156, 159, and 163. Residues 138-172 (SRDYYSSRSQSGGYSDRSSGGSYRDSYDSYATHNE) show a composition bias toward low complexity.

Interacts with EIF4G1. Associates with ribosomes. Methylated on arginine residues. Methylation of the RGG motifs is a prerequisite for recruitment into SGs. Post-translationally, phosphorylated by CK2, GSK3A and GSK3B. Phosphorylation by GSK3B increases RNA-binding activity to the TXN 3'-UTR transcript upon exposure to UV radiation.

It localises to the nucleus. The protein localises to the nucleoplasm. Its subcellular location is the cytoplasm. Its function is as follows. Cold-inducible mRNA binding protein that plays a protective role in the genotoxic stress response by stabilizing transcripts of genes involved in cell survival. Acts as a translational activator. Seems to play an essential role in cold-induced suppression of cell proliferation. Binds specifically to the 3'-untranslated regions (3'-UTRs) of stress-responsive transcripts RPA2 and TXN. Acts as a translational repressor. Promotes assembly of stress granules (SGs), when overexpressed. The protein is Cold-inducible RNA-binding protein (CIRBP) of Pongo abelii (Sumatran orangutan).